The sequence spans 1035 residues: Kinesin-like protein KIN-4A (1035 aa).

One can recognise a Kinesin motor domain in the interval 10–369 (CVKVAVHVRP…LKYANRARNI (360 aa)). Residue 89–96 (GQTGSGKT) participates in ATP binding. Coiled coils occupy residues 380 to 437 (VADE…LRNH) and 498 to 702 (MLQD…RKSS). Disordered regions lie at residues 697 to 720 (EARK…HMTE), 766 to 787 (VMSG…NTLS), and 882 to 928 (HSES…PLSP). Polar residues-rich tracts occupy residues 704–716 (RDNS…SPGS) and 778–787 (NGNSRANTLS). A coiled-coil region spans residues 850–904 (NVAADARCQVREKEMEIKEMKEQMTELVTILRHSESRRRETEKQLKQREQAAVTA). Basic and acidic residues predominate over residues 882 to 898 (HSESRRRETEKQLKQRE). A compositionally biased stretch (polar residues) spans 902-926 (VTATTSPGNGNGSVKHSADDSNTPL). A Nuclear localization signal motif is present at residues 971 to 987 (KKVSIAGQSGKLWRWKR). The tract at residues 1014-1035 (DETMTRTRPRPQLLPHRPQRVM) is disordered.

It belongs to the TRAFAC class myosin-kinesin ATPase superfamily. Kinesin family. KIN-4 subfamily. In terms of assembly, homodimer. Expressed in young tissues with cell divisions, including initiating adventitious roots, primary root tips, flower primordia, intercalary meristems, sub-epidermal regions of young culms and panicles.

It is found in the nucleus. Its subcellular location is the cytoplasm. The protein resides in the cytoskeleton. With respect to regulation, may be regulated by cyclin-dependent kinase A. Its function is as follows. Microtubule-dependent motor protein involved in the control of the oriented deposition of cellulose microfibrils. Involved in wall biogenesis and modification, and contributes to cell-cycle progression and cell division. Acts as a transcriptional activator in gibberellic acid (GA) biosynthesis pathway. Binds specifically to the DNA sequence 5'-ACCAACTTGAA-3' of the ent-kaurene oxidase 2 (CYP701A6 or OsKO2) promoter. May regulate CYP701A6 gene expression and mediates cell elongation by regulating the GA biosynthesis pathway. In Oryza sativa subsp. japonica (Rice), this protein is Kinesin-like protein KIN-4A.